We begin with the raw amino-acid sequence, 214 residues long: Acetoin utilization protein AcuB (214 aa).

CBS domains are found at residues 7-66 (MKRD…ENKR) and 78-135 (MKKD…GADQ).

In terms of assembly, interacts with YabA.

It functions in the pathway ketone degradation; acetoin degradation. Its function is as follows. Role in growth and sporulation on acetoin or butanediol. Involved in the breakdown of these compounds used as a carbon source. This chain is Acetoin utilization protein AcuB (acuB), found in Bacillus subtilis (strain 168).